The following is a 115-amino-acid chain: Photosystem II reaction center Psb28 protein (115 aa).

This sequence belongs to the Psb28 family. Part of the photosystem II complex.

Its subcellular location is the plastid. The protein localises to the chloroplast thylakoid membrane. The protein is Photosystem II reaction center Psb28 protein of Phaeodactylum tricornutum (strain CCAP 1055/1).